Here is a 168-residue protein sequence, read N- to C-terminus: Large ribosomal subunit protein bL17 (168 aa).

Residues 124–168 (QATGEAEAATKRAAKDAEGSAEVSEAKVDTTKADDEAAAEESKDA) form a disordered region. Residues 131-168 (AATKRAAKDAEGSAEVSEAKVDTTKADDEAAAEESKDA) are compositionally biased toward basic and acidic residues.

It belongs to the bacterial ribosomal protein bL17 family. As to quaternary structure, part of the 50S ribosomal subunit. Contacts protein L32.

This chain is Large ribosomal subunit protein bL17, found in Streptomyces coelicolor (strain ATCC BAA-471 / A3(2) / M145).